A 582-amino-acid polypeptide reads, in one-letter code: Aspartate--tRNA ligase (582 aa).

E174 serves as a coordination point for L-aspartate. The segment at 198–201 (QITK) is aspartate. L-aspartate is bound at residue R220. Residues 220 to 222 (RDE) and Q229 contribute to the ATP site. H443 lines the L-aspartate pocket. Position 477 (E477) interacts with ATP. R484 is a binding site for L-aspartate. 529–532 (GLDR) provides a ligand contact to ATP.

It belongs to the class-II aminoacyl-tRNA synthetase family. Type 1 subfamily. As to quaternary structure, homodimer.

It is found in the cytoplasm. It carries out the reaction tRNA(Asp) + L-aspartate + ATP = L-aspartyl-tRNA(Asp) + AMP + diphosphate. Catalyzes the attachment of L-aspartate to tRNA(Asp) in a two-step reaction: L-aspartate is first activated by ATP to form Asp-AMP and then transferred to the acceptor end of tRNA(Asp). The chain is Aspartate--tRNA ligase from Streptococcus equi subsp. zooepidemicus (strain MGCS10565).